Consider the following 156-residue polypeptide: Small ribosomal subunit protein uS7 (156 aa).

Belongs to the universal ribosomal protein uS7 family. As to quaternary structure, part of the 30S ribosomal subunit. Contacts proteins S9 and S11.

Functionally, one of the primary rRNA binding proteins, it binds directly to 16S rRNA where it nucleates assembly of the head domain of the 30S subunit. Is located at the subunit interface close to the decoding center, probably blocks exit of the E-site tRNA. This Citrobacter koseri (strain ATCC BAA-895 / CDC 4225-83 / SGSC4696) protein is Small ribosomal subunit protein uS7.